Reading from the N-terminus, the 590-residue chain is Protein OS-9 homolog (590 aa).

An N-terminal signal peptide occupies residues 1–19; the sequence is MRRPSLALLALSSLPFGSA. Residues 83–106 are disordered; the sequence is SAIRESATANADTDNGDESIGGTS. N136 carries N-linked (GlcNAc...) asparagine glycosylation. Positions 167 to 312 constitute an MRH domain; sequence NQCLHFVSGW…VIHTPRLCAD (146 aa). C169 and C182 are joined by a disulfide. The a mannooligosaccharide derivative site is built by W176, W177, and Q189. The interval 198-248 is disordered; the sequence is GGPPLRDKNSQEYILGTSLPPSSHSQKGKQIEVPNNEQKQLSPPPNTELQA. Disulfide bonds link C265–C298 and C280–C310. Residues D266, R272, E294, and Y300 each contribute to the a mannooligosaccharide derivative site. 3 disordered regions span residues 357 to 376, 436 to 472, and 545 to 590; these read AAVTTEDQKQGSESGSPEKL, GDDNNNNNNNHHPKAGKGRKAAGAGKGQSGQKEMKKM, and YEDE…RDEL. The segment covering 446–455 has biased composition (basic residues); the sequence is HHPKAGKGRK. Basic and acidic residues-rich tracts occupy residues 556-568 and 579-590; these read EAGKDQKESKKGG and EGSKEEYYRDEL. The Prevents secretion from ER signature appears at 587 to 590; sequence RDEL.

This sequence belongs to the OS-9 family. Interacts with missfolded ER lumenal proteins.

It is found in the endoplasmic reticulum membrane. In terms of biological role, lectin involved in the quality control of the secretory pathway. As a member of the endoplasmic reticulum-associated degradation lumenal (ERAD-L) surveillance system, targets misfolded endoplasmic reticulum lumenal glycoproteins for degradation. The sequence is that of Protein OS-9 homolog (yos-9) from Neurospora crassa (strain ATCC 24698 / 74-OR23-1A / CBS 708.71 / DSM 1257 / FGSC 987).